Here is a 433-residue protein sequence, read N- to C-terminus: MSMVVQPVEEKAVHSWSRISTAGKKALEEALLVFNPMSQDLSATEAQLVAFLQGLRDDGFQPTILRSGDVYGYSSCTASPPSQTKLQARTINPPATSLPKTAVSVPAGRTTLLPVPLSGRLAKGSTAALAKHATTNLLLSSLKQSSASNSSGTTVGFPAHLYPGVYPAMRLSVVLEALVPLKTPCLDVKHGAQSLQLSLAKSPLKVRKASGNPKSKAPRKITSKGLKHLTSKGPGAGLRRGAGTQSNGAQRKGCSALGPKTVQAQASQTLIKAARAHASVAQTQTKTVRVRAKAKQAKPKAARAKAKAAVVRDKAKDKVIQAKAKAAQTKHKGKPKGSVQTRTGRANRKNSSETVGRKRKKAEETKGLPPKKRARCVPRPPKVWLGPGTAKPRKSQTIKVDRKCSDDEVRQCAQQILRVNLSPVVWLQPLLPF.

The residue at position 125 (serine 125) is a Phosphoserine. Disordered regions lie at residues 204–256 (LKVR…GCSA), 284–310 (QTKT…KAAV), and 325–396 (KAAQ…RKSQ). 2 stretches are compositionally biased toward basic residues: residues 216–230 (KAPR…KHLT) and 288–306 (VRVR…RAKA). The stretch at 260 to 330 (KTVQAQASQT…QAKAKAAQTK (71 aa)) forms a coiled coil.

The sequence is that of Coiled-coil domain-containing protein 71 (Ccdc71) from Mus musculus (Mouse).